The chain runs to 286 residues: Bifunctional protein FolD (286 aa).

NADP(+)-binding positions include 164-166, S193, and I234; that span reads GRS.

This sequence belongs to the tetrahydrofolate dehydrogenase/cyclohydrolase family. Homodimer.

The enzyme catalyses (6R)-5,10-methylene-5,6,7,8-tetrahydrofolate + NADP(+) = (6R)-5,10-methenyltetrahydrofolate + NADPH. It carries out the reaction (6R)-5,10-methenyltetrahydrofolate + H2O = (6R)-10-formyltetrahydrofolate + H(+). It participates in one-carbon metabolism; tetrahydrofolate interconversion. Functionally, catalyzes the oxidation of 5,10-methylenetetrahydrofolate to 5,10-methenyltetrahydrofolate and then the hydrolysis of 5,10-methenyltetrahydrofolate to 10-formyltetrahydrofolate. In Nitratidesulfovibrio vulgaris (strain ATCC 29579 / DSM 644 / CCUG 34227 / NCIMB 8303 / VKM B-1760 / Hildenborough) (Desulfovibrio vulgaris), this protein is Bifunctional protein FolD.